The chain runs to 560 residues: Dihydroxy-acid dehydratase (560 aa).

Asp78 is a Mg(2+) binding site. A [2Fe-2S] cluster-binding site is contributed by Cys119. Mg(2+) is bound by residues Asp120 and Lys121. At Lys121 the chain carries N6-carboxylysine. [2Fe-2S] cluster is bound at residue Cys192. Glu446 serves as a coordination point for Mg(2+). Catalysis depends on Ser472, which acts as the Proton acceptor.

The protein belongs to the IlvD/Edd family. As to quaternary structure, homodimer. It depends on [2Fe-2S] cluster as a cofactor. Mg(2+) serves as cofactor.

The enzyme catalyses (2R)-2,3-dihydroxy-3-methylbutanoate = 3-methyl-2-oxobutanoate + H2O. The catalysed reaction is (2R,3R)-2,3-dihydroxy-3-methylpentanoate = (S)-3-methyl-2-oxopentanoate + H2O. It participates in amino-acid biosynthesis; L-isoleucine biosynthesis; L-isoleucine from 2-oxobutanoate: step 3/4. It functions in the pathway amino-acid biosynthesis; L-valine biosynthesis; L-valine from pyruvate: step 3/4. Its function is as follows. Functions in the biosynthesis of branched-chain amino acids. Catalyzes the dehydration of (2R,3R)-2,3-dihydroxy-3-methylpentanoate (2,3-dihydroxy-3-methylvalerate) into 2-oxo-3-methylpentanoate (2-oxo-3-methylvalerate) and of (2R)-2,3-dihydroxy-3-methylbutanoate (2,3-dihydroxyisovalerate) into 2-oxo-3-methylbutanoate (2-oxoisovalerate), the penultimate precursor to L-isoleucine and L-valine, respectively. This chain is Dihydroxy-acid dehydratase, found in Anaeromyxobacter dehalogenans (strain 2CP-1 / ATCC BAA-258).